We begin with the raw amino-acid sequence, 348 residues long: MSLPRFQRVNFGPYDNYIPVSELSKKSWNQQHFALLFPKPQRPGTKRRSKPSQIRDNTVSIIDEEQLRGDRRQPLWMYRSLMRISERPSVYLAARRQPLKPTRTVEVDSKAAEIGKKGEDKTTQKDTTDSESELKQGKKDSKKGKDIEKGKEEKLDAKKDSKKGKKDAEKGKDSATESEDEKGGAKKDNKKDKKDSNKGKDSATESEGEKGGTEKDSKKGKKDSKKGKDSAIELQAVKADEKKDEDGKKDANKGDESKDAKKDAKEIKKGKKDKKKPSSTDSDSKDDVKKESKKDATKDAKKVAKKDTEKESADSKKDAKKNAKKDAKKDAKKNAKKDEKKDAKKKGK.

Residues 25–347 (KKSWNQQHFA…DEKKDAKKKG (323 aa)) are 31 X 3 AA repeats of K-K-X. Disordered stretches follow at residues 35–59 (LLFP…DNTV) and 101–348 (PTRT…KKGK). Basic and acidic residues-rich tracts occupy residues 103-159 (RTVE…DAKK), 166-217 (KDAE…EKDS), 238-267 (KADE…AKEI), and 276-342 (KPSS…EKKD). Tandem repeats lie at residues 157–184 (AKKD…EKGG), 185–212 (AKKD…EKGG), and 213–240 (TEKD…VKAD). Residues 157 to 240 (AKKDSKKGKK…AIELQAVKAD (84 aa)) form a 3 X approximate tandem repeats region.

As to expression, testis.

Its subcellular location is the cytoplasm. It localises to the cytoskeleton. The protein resides in the perinuclear theca. The protein localises to the calyx. Plays a role in the establishment of normal sperm morphology during spermatogenesis. It is required for acrosome attachment to the nuclear envelope, and proper manchette elongation and disassembly. This is Cylicin-2 (CYLC2) from Homo sapiens (Human).